Here is a 541-residue protein sequence, read N- to C-terminus: Halolysin-like extracellular serine protease Nep (541 aa).

A signal peptide (tat-type signal) is located at residues 1–33 (MTRDTNSNVGRRSVLKAASALGAFLGLGGVASA). Residues 34-121 (TPGREPGPKK…DNATYETLEV (88 aa)) constitute a propeptide that is removed on maturation. Positions 130–405 (QYAPQQVNCE…YGRVDAELAV (276 aa)) constitute a Peptidase S8 domain. Active-site charge relay system residues include aspartate 157, histidine 198, and serine 351. The interval 403 to 453 (LAVTTDPDNGDDDDDDDDDEDDPGDGECGDETNTATADGELSGGWGGNPSD) is disordered. Residues 410–432 (DNGDDDDDDDDDEDDPGDGECGD) are compositionally biased toward acidic residues.

The protein belongs to the peptidase S8 family. In terms of assembly, monomer. Post-translationally, exported by the Tat system. The position of the signal peptide cleavage has not been experimentally proven. After transport across the membrane, the propeptide is probably processed autocatalytically, yielding the mature fully active protease.

It localises to the secreted. Its activity is regulated as follows. Dependent on high salt concentrations for activity and stability. Strongly inhibited by the serine protease inhibitors diisopropyl fluorophosphate (DFP), phenylmethyl sulfonylfluoride (PMSF) and chymostatin. Also inhibited by denaturing agents such as SDS, urea, and HCl guanidinium. Activated by thiol-containing reducing agents such as dithiotreitol (DTT) and 2-mercaptoethanol. Its function is as follows. Serine protease that hydrolyzes large proteins such as casein and gelatin. Cleaves preferentially at the carboxyl terminus of Phe, Tyr or Leu. Is also able to catalyze peptide synthesis under different salt concentrations in the presence of dimethyl sulfoxide (DMSO). The polypeptide is Halolysin-like extracellular serine protease Nep (Natrialba magadii).